The primary structure comprises 250 residues: 3-deoxy-manno-octulosonate cytidylyltransferase (250 aa).

It belongs to the KdsB family.

The protein resides in the cytoplasm. It carries out the reaction 3-deoxy-alpha-D-manno-oct-2-ulosonate + CTP = CMP-3-deoxy-beta-D-manno-octulosonate + diphosphate. The protein operates within nucleotide-sugar biosynthesis; CMP-3-deoxy-D-manno-octulosonate biosynthesis; CMP-3-deoxy-D-manno-octulosonate from 3-deoxy-D-manno-octulosonate and CTP: step 1/1. It functions in the pathway bacterial outer membrane biogenesis; lipopolysaccharide biosynthesis. Activates KDO (a required 8-carbon sugar) for incorporation into bacterial lipopolysaccharide in Gram-negative bacteria. This Herminiimonas arsenicoxydans protein is 3-deoxy-manno-octulosonate cytidylyltransferase.